Reading from the N-terminus, the 283-residue chain is Hydrogenase expression/formation protein HoxQ (283 aa).

Positions 1-29 (MNDDLPILPPGFGPGSHGEEERPDCPSMP) are disordered.

The protein belongs to the HupH/HyaF family.

This is Hydrogenase expression/formation protein HoxQ (hoxQ) from Azotobacter vinelandii.